Consider the following 505-residue polypeptide: Cyanidin 3-O-glucoside 7-O-glucosyltransferase (acyl-glucose) (505 aa).

Residues Met-1 to Ala-25 form the signal peptide. Residues Gln-52, His-152, and Asn-197 to Glu-198 each bind a beta-D-glucoside. The Proton donor role is filled by Glu-198. A disulfide bridge links Cys-217 with Cys-225. N-linked (GlcNAc...) asparagine glycosylation is found at Asn-224, Asn-229, and Asn-324. Residues Tyr-341 and Glu-403 each contribute to the a beta-D-glucoside site. Residue Glu-403 is the Nucleophile of the active site. N-linked (GlcNAc...) asparagine glycans are attached at residues Asn-411 and Asn-437. Positions 447 and 463 each coordinate a beta-D-glucoside. N-linked (GlcNAc...) asparagine glycosylation occurs at Asn-494.

Belongs to the glycosyl hydrolase 1 family.

It localises to the vacuole. It catalyses the reaction 1-O-(4-hydroxy-3-methoxybenzoyl)-beta-D-glucose + cyanidin 3-O-beta-D-glucoside = cyanidin 3,7-di-O-beta-D-glucoside + vanillate. The protein operates within pigment biosynthesis; anthocyanin biosynthesis. Its function is as follows. Beta-glycosidase that catalyzes the transfer of glucose moiety to anthocyanidin 3-glucoside at the 7 position. Anthocyanins are ubiquitous colored pigments that are responsible for variations in petal color. This Delphinium grandiflorum (Siberian larkspur) protein is Cyanidin 3-O-glucoside 7-O-glucosyltransferase (acyl-glucose) (AA7GT).